A 60-amino-acid polypeptide reads, in one-letter code: Stress response protein YkoL (60 aa).

The sequence is that of Stress response protein YkoL (ykoL) from Bacillus subtilis (strain 168).